We begin with the raw amino-acid sequence, 450 residues long: Exodeoxyribonuclease 7 large subunit (450 aa).

Belongs to the XseA family. Heterooligomer composed of large and small subunits.

Its subcellular location is the cytoplasm. It catalyses the reaction Exonucleolytic cleavage in either 5'- to 3'- or 3'- to 5'-direction to yield nucleoside 5'-phosphates.. In terms of biological role, bidirectionally degrades single-stranded DNA into large acid-insoluble oligonucleotides, which are then degraded further into small acid-soluble oligonucleotides. In Listeria monocytogenes serotype 4b (strain CLIP80459), this protein is Exodeoxyribonuclease 7 large subunit.